A 546-amino-acid polypeptide reads, in one-letter code: CTP synthase (546 aa).

Residues 1-266 form an amidoligase domain region; sequence MTTNYIFVTG…DDLVCARFGI (266 aa). Position 14 (Ser-14) interacts with CTP. Residue Ser-14 coordinates UTP. ATP is bound by residues 15 to 20 and Asp-72; that span reads SLGKGI. Residues Asp-72 and Glu-140 each contribute to the Mg(2+) site. Residues 147–149, 187–192, and Lys-223 contribute to the CTP site; these read DIE and KTKPTQ. UTP contacts are provided by residues 187–192 and Lys-223; that span reads KTKPTQ. 239-241 is a binding site for ATP; the sequence is KDV. One can recognise a Glutamine amidotransferase type-1 domain in the interval 291-542; that stretch reads TIGMVGKYIE…VKAAGQNARG (252 aa). L-glutamine is bound at residue Gly-352. Cys-379 acts as the Nucleophile; for glutamine hydrolysis in catalysis. Residues 380 to 383, Glu-403, and Arg-470 each bind L-glutamine; that span reads LGMQ. Catalysis depends on residues His-515 and Glu-517.

The protein belongs to the CTP synthase family. As to quaternary structure, homotetramer.

It catalyses the reaction UTP + L-glutamine + ATP + H2O = CTP + L-glutamate + ADP + phosphate + 2 H(+). The catalysed reaction is L-glutamine + H2O = L-glutamate + NH4(+). The enzyme catalyses UTP + NH4(+) + ATP = CTP + ADP + phosphate + 2 H(+). Its pathway is pyrimidine metabolism; CTP biosynthesis via de novo pathway; CTP from UDP: step 2/2. Allosterically activated by GTP, when glutamine is the substrate; GTP has no effect on the reaction when ammonia is the substrate. The allosteric effector GTP functions by stabilizing the protein conformation that binds the tetrahedral intermediate(s) formed during glutamine hydrolysis. Inhibited by the product CTP, via allosteric rather than competitive inhibition. Catalyzes the ATP-dependent amination of UTP to CTP with either L-glutamine or ammonia as the source of nitrogen. Regulates intracellular CTP levels through interactions with the four ribonucleotide triphosphates. In Vibrio campbellii (strain ATCC BAA-1116), this protein is CTP synthase.